A 216-amino-acid polypeptide reads, in one-letter code: UPF0323 lipoprotein HPG27_212 (216 aa).

The signal sequence occupies residues 1-27 (MKKPYRKISDYAIVGGLSALVMVSIVG). The N-palmitoyl cysteine moiety is linked to residue Cys28. Cys28 carries the S-diacylglycerol cysteine lipid modification. Residues 159 to 170 (QRTYKSPQAYQR) show a composition bias toward polar residues. The segment at 159 to 216 (QRTYKSPQAYQRSQNSFSKSAPSASSMGGASKGQSGFFGSSRPTSSPAVSSGTRGFNS) is disordered. Residues 171–209 (SQNSFSKSAPSASSMGGASKGQSGFFGSSRPTSSPAVSS) show a composition bias toward low complexity.

Belongs to the UPF0323 family.

It localises to the cell membrane. This is UPF0323 lipoprotein HPG27_212 from Helicobacter pylori (strain G27).